A 369-amino-acid chain; its full sequence is MRFSFLSGIRDLFRHFIISAASGALSDRLGWVWGAIAKVFSGSVWLRYKIAKPPHQVQATVVSVGNIVVGGTGKTPLVLWLAQALNERGISCAVLSRGYKGKCSQRKSFTIVDPALHTAACVGDEPLLLAKHLPAGTVRIQKDRKALAEKSAGAFDVLLLDDGFQCNRLHKDVEIVLVNGSDPFGGRAFFPKGRLRDFPERLAKANYVIVNGKCSPSDQRELDLLNPAAKILVEPQISEIVWLNKSANMPRDHWEGLGVGVFCGLGFPKGFLTMLRNAGIHVLGTHLLPDHSGITKQELELFCKKIILRQGVGILCTEKDSVKIEAFAEEMSLPIGEVRMRFSCVCNEERMVAMLDAIEAIQKNKKVTT.

68–75 is a binding site for ATP; that stretch reads VVGGTGKT.

Belongs to the LpxK family.

The catalysed reaction is a lipid A disaccharide + ATP = a lipid IVA + ADP + H(+). The protein operates within glycolipid biosynthesis; lipid IV(A) biosynthesis; lipid IV(A) from (3R)-3-hydroxytetradecanoyl-[acyl-carrier-protein] and UDP-N-acetyl-alpha-D-glucosamine: step 6/6. Its function is as follows. Transfers the gamma-phosphate of ATP to the 4'-position of a tetraacyldisaccharide 1-phosphate intermediate (termed DS-1-P) to form tetraacyldisaccharide 1,4'-bis-phosphate (lipid IVA). This is Tetraacyldisaccharide 4'-kinase from Chlamydia muridarum (strain MoPn / Nigg).